Reading from the N-terminus, the 419-residue chain is Glutamyl-tRNA reductase (419 aa).

Substrate-binding positions include 49-52 (TCNR), Ser-107, 112-114 (EPQ), and Gln-118. Residue Cys-50 is the Nucleophile of the active site. 187-192 (GAGETI) lines the NADP(+) pocket.

This sequence belongs to the glutamyl-tRNA reductase family. As to quaternary structure, homodimer.

It catalyses the reaction (S)-4-amino-5-oxopentanoate + tRNA(Glu) + NADP(+) = L-glutamyl-tRNA(Glu) + NADPH + H(+). The protein operates within porphyrin-containing compound metabolism; protoporphyrin-IX biosynthesis; 5-aminolevulinate from L-glutamyl-tRNA(Glu): step 1/2. Catalyzes the NADPH-dependent reduction of glutamyl-tRNA(Glu) to glutamate 1-semialdehyde (GSA). The polypeptide is Glutamyl-tRNA reductase (Psychromonas ingrahamii (strain DSM 17664 / CCUG 51855 / 37)).